The following is a 260-amino-acid chain: Histidine-binding periplasmic protein (260 aa).

A signal peptide spans 1–22; sequence MKKLVLSLSLVLAFSSATAAFA. Cys60 and Cys67 are oxidised to a cystine. Residues Ser91, Ser92, Ser94, Arg99, Thr143, and Asp183 each contribute to the L-histidine site.

Belongs to the bacterial solute-binding protein 3 family. As to quaternary structure, the complex is composed of two ATP-binding proteins (HisP), two transmembrane proteins (HisM and HisQ) and a solute-binding protein (HisJ).

Its subcellular location is the periplasm. In terms of biological role, part of the ABC transporter complex HisPMQJ involved in histidine transport. Binds histidine. Interacts with HisQMP and stimulates ATPase activity of HisP, which results in histidine translocation. The polypeptide is Histidine-binding periplasmic protein (hisJ) (Escherichia coli O157:H7).